A 237-amino-acid polypeptide reads, in one-letter code: MGAQWKAKGKAQAADARGKLFGRLAKDIMVAARGGADPASNSRLRLVVEQARKVSMPKDTLERAIKKGAGLTGEAVHFEHVMYEGFAPHQVPVMVECLTDNVKRTAPEMRVLFRKGHLGASGSVAWDFDHVGMIEAEPVVAGSDPEVAAIEAGAEDFEPGHEEGTTLFLTAPTDLDLVSRALPAQGFTVISAKLGYKPKNPIDPASLDPAHLEEVEAFLAAIDANDDVQNVFVGLAG.

The protein belongs to the TACO1 family.

It localises to the cytoplasm. This is Probable transcriptional regulatory protein Bpro_2928 from Polaromonas sp. (strain JS666 / ATCC BAA-500).